Consider the following 377-residue polypeptide: Pseudouridylate synthase RPUSD4, mitochondrial (377 aa).

The transit peptide at 1–35 (MAAPLLGSPGLQVLSMSSRTGKLFTPSSRSFCSRA) directs the protein to the mitochondrion. Asp-153 is an active-site residue.

It belongs to the pseudouridine synthase RluA family. In terms of assembly, interacts with 16S mt-rRNA, mt-tRNA(Phe) and mt-tRNA(Met). Forms a regulatory protein-RNA complex, consisting of RCC1L, NGRN, RPUSD3, RPUSD4, TRUB2, FASTKD2 and 16S mt-rRNA.

Its subcellular location is the mitochondrion matrix. It localises to the nucleus. It is found in the cytoplasm. The enzyme catalyses uridine in 5S rRNA = pseudouridine in 5S rRNA. The catalysed reaction is a uridine in tRNA = a pseudouridine in tRNA. It catalyses the reaction a uridine in mRNA = a pseudouridine in mRNA. Functionally, catalyzes uridine to pseudouridine isomerization (pseudouridylation) of different mitochondrial RNA substrates. Acts on position 1397 in 16S mitochondrial ribosomal RNA (16S mt-rRNA). This modification is required for the assembly of 16S mt-rRNA into a functional mitochondrial ribosome. As a component of a functional protein-RNA module, consisting of RCC1L, NGRN, RPUSD3, RPUSD4, TRUB2, FASTKD2 and 16S mt-rRNA, controls 16S mt-rRNA abundance and is required for intra-mitochondrial translation. Acts on position 39 in mitochondrial tRNA(Phe). Also catalyzes pseudouridylation of mRNAs in nucleus: acts as a regulator of pre-mRNA splicing by mediating pseudouridylation of pre-mRNAs at locations associated with alternatively spliced regions. Pseudouridylation of pre-mRNAs near splice sites directly regulates mRNA splicing and mRNA 3'-end processing. The polypeptide is Pseudouridylate synthase RPUSD4, mitochondrial (Rattus norvegicus (Rat)).